A 231-amino-acid chain; its full sequence is Regulatory protein VanR (231 aa).

The region spanning 4 to 117 (KILIVDDEHE…ELIARVKAQL (114 aa)) is the Response regulatory domain. At D53 the chain carries 4-aspartylphosphate. The segment at residues 131 to 231 (ENVIVHSGLV…VWGVGYKIEK (101 aa)) is a DNA-binding region (ompR/PhoB-type).

As to quaternary structure, monomer. In terms of processing, phosphorylated by VanS. Dephosphorylated by VanS. Can be phosphorylated nonenzymatically by acetyl-phosphate.

It is found in the cytoplasm. Functionally, member of the two-component regulatory system VanS/VanR. Binds to the promoter regions of target genes, including vanH and vanR; phosphorylation of VanR increases binding affinity to the vanH and vanR promoters significantly. DNA binding may be inhibited by the cognate sensor protein, VanS. Activates the transcription of vanH, vanA and vanX in response to vancomycin which results in vancomycin resistance. Involved in conferring vancomycin resistance. In Enterococcus faecium (Streptococcus faecium), this protein is Regulatory protein VanR (vanR).